Consider the following 355-residue polypeptide: CRAL-TRIO domain-containing protein C365.01 (355 aa).

One can recognise a CRAL-TRIO domain in the interval 93–260 (ENGLNQNFVK…SMHGQFDETK (168 aa)).

The sequence is that of CRAL-TRIO domain-containing protein C365.01 from Schizosaccharomyces pombe (strain 972 / ATCC 24843) (Fission yeast).